The primary structure comprises 430 residues: MTQLQSLRGMVDLLPQALQRWQAVESVARTHFQRSGFGEIRTPVMEPTDLFCRGIGEATDVVGKEMYTFNDRGDRSCTLRPEGTASVVRAALQHGLLSQGPQKLWYAGPMFRYERPQAGRQRQFHQIGVEWLGAASARADVEVIALAWDLLASLGVGGLELELNSLGSTDDRCAYRTALVAWLEQRSNLLDEDSRARLNTNPLRILDSKNKATQALLDGAPTLANSLAPESRERFEVVQQGLASLGIPFRLSPRLVRGLDYYCHTAFEITSDQLGAQATVCGGGRYNGLIGQLGGPDTPAVGWALGMERLLLVVEAAANADPDGDSARLTAVVPPNAYLVNRGEQAEKAALILARSLRCAGLVIELDNSGASFSKQFKRADRCGARWALVLGDEEVEKGEVRIKPLSDESDDFFLGLHDLTGLLAKLTAM.

The protein belongs to the class-II aminoacyl-tRNA synthetase family. In terms of assembly, homodimer.

It is found in the cytoplasm. It carries out the reaction tRNA(His) + L-histidine + ATP = L-histidyl-tRNA(His) + AMP + diphosphate + H(+). The protein is Histidine--tRNA ligase of Synechococcus sp. (strain CC9902).